Reading from the N-terminus, the 317-residue chain is Ribosomal RNA small subunit methyltransferase H (317 aa).

S-adenosyl-L-methionine-binding positions include 32 to 34, Asp51, Phe78, Asp99, and Gln106; that span reads GGH.

This sequence belongs to the methyltransferase superfamily. RsmH family.

The protein resides in the cytoplasm. The enzyme catalyses cytidine(1402) in 16S rRNA + S-adenosyl-L-methionine = N(4)-methylcytidine(1402) in 16S rRNA + S-adenosyl-L-homocysteine + H(+). Its function is as follows. Specifically methylates the N4 position of cytidine in position 1402 (C1402) of 16S rRNA. The polypeptide is Ribosomal RNA small subunit methyltransferase H (Helicobacter hepaticus (strain ATCC 51449 / 3B1)).